The primary structure comprises 134 residues: Histone-like protein Rv3852 (134 aa).

A compositionally biased stretch (basic and acidic residues) spans 1–10 (MPDPQDRPDS). The tract at residues 1–68 (MPDPQDRPDS…PAEAPVSLQQ (68 aa)) is disordered. Positions 23 to 48 (LPAKKAAKKAPARKTPAKKAPAKKTP) are enriched in basic residues. Residues 111-128 (PVPLIVAVTLSLLALLLI) form a helical membrane-spanning segment.

Homodimer in solution. Is probably able to self-associate in higher oligomers along the DNA molecules. Interacts with the N-terminal region of Wag31.

It is found in the cell inner membrane. Can interact directly in vitro with the compound agrimophol, a phloroglucinol from the A.pilosa plant, whose extracts have been used in traditional Chinese medicine to treat pulmonary infections. Interaction with agrimophol leads to disruption of Rv3852's DNA binding function. Binds DNA in vitro. It has been proposed that Rv3852 plays a role in nucleoid organization and may function as an anchorage to tether the DNA to the membrane. However, it was later shown that it has no influence on nucleoid shape or compaction. It plays no role in virulence and only a minor role in the control of transcription, and does not appear to function as a typical nucleoid-associated protein. Functionally, interacts with Wag31, an important cell shape and cell wall integrity determinant, and facilitates the localization of Wag31 to the cell poles and the cell wall, thus enabling nascent peptidoglycan synthesis. In Mycobacterium tuberculosis (strain ATCC 25618 / H37Rv), this protein is Histone-like protein Rv3852.